Consider the following 31-residue polypeptide: Mu-conotoxin SmIIIA (31 aa).

Residues 1–6 constitute a propeptide that is removed on maturation; that stretch reads PLFDKR. Gln-7 is modified (pyrrolidone carboxylic acid). Intrachain disulfides connect Cys-9-Cys-21, Cys-10-Cys-27, and Cys-16-Cys-28. Cys-28 carries the post-translational modification Cysteine amide.

The protein belongs to the conotoxin M superfamily. SmIIIA' is a putative isoform where the N-terminal AA is missing. Expressed by the venom duct.

It is found in the secreted. Its function is as follows. Mu-conotoxins block voltage-gated sodium channels (Nav). This toxin blocks rNav1.5/SCN5A (IC(50) is 1.3 uM), rNav1.6/SCN8A (IC(50) is 160 nM), rNav1.7/SCN9A (IC(50) is 1.3 uM), rNav1.1/SCN1A (K(d) is 3.8 nM), rNav1.2/SCN2A (K(d) is 1.3 nM), rNav1.4/SCN4A (K(d) is 0.22 nM), rNav1.6/SCN8A (K(d) is 69 nM), and rNav1.7/SCN9A (K(d) is 260 nM). This toxin is very potent but weakly discriminating among sodium channels. The block of these channels is modified when beta-subunits are coexpressed with alpha subunits. Hence, blocks of channels containing beta-1 and beta-3 subunits are more potent (compared to channels without beta subunits), whereas blocks of channels containing beta-2 and beta-4 subunits are less potent (compared to channels without beta subunits). The protein is Mu-conotoxin SmIIIA of Conus stercusmuscarum (Fly-specked cone).